The sequence spans 396 residues: Multidrug resistance protein MdtL (396 aa).

At 1 to 4 (MFRY) the chain is on the cytoplasmic side. Residues 5–25 (LLCCFGLVLMYPTGIDMYLVG) traverse the membrane as a helical segment. Over 26-41 (LPQIANQLGATEAQLH) the chain is Periplasmic. A helical membrane pass occupies residues 42-62 (IAFSVYLAGMATTMLFAGSLA). Topologically, residues 63–64 (DR) are cytoplasmic. The helical transmembrane segment at 65–85 (IGRKPITLFSALLFALASYFA) threads the bilayer. The Periplasmic segment spans residues 86-92 (ARSQSSD). Residues 93-113 (LFLVARFVQGVGAGCCYVVAF) traverse the membrane as a helical segment. Residues 114 to 131 (AILRDALDDKRRAKVLSM) are Cytoplasmic-facing. The chain crosses the membrane as a helical span at residues 132–152 (VNGVTCIIPVIAPVIGHLIML). Over 153–157 (RFPWP) the chain is Periplasmic. The helical transmembrane segment at 158-178 (SLFYTMAVMGLLVFGLCLFVL) threads the bilayer. Residues 179–209 (RETYSKASFHSQTLPRVQTESFKQGFFISRV) are Cytoplasmic-facing. A helical transmembrane segment spans residues 210–230 (VITTLGVTTILSYVNVSPMLI). The Periplasmic segment spans residues 231-242 (MGQMGFDRGQYS). The helical transmembrane segment at 243 to 263 (NTMAMTALVSMLASFSTPFLL) threads the bilayer. At 264–277 (NQFKEKSLILFSQT) the chain is on the cytoplasmic side. Helical transmembrane passes span 278 to 298 (LFAA…GQLF) and 299 to 319 (NLLG…VTMS). Topologically, residues 320-333 (QALSPFVARAGVAS) are cytoplasmic. Residues 334 to 354 (SLLGIAQVCTSALYIWVMGLL) traverse the membrane as a helical segment. Over 355–360 (EVSAIN) the chain is Periplasmic. Residues 361–381 (ILLAILAVGALISITLMLAVP) traverse the membrane as a helical segment. Residues 382 to 396 (KLSEMVANEQIPESA) are Cytoplasmic-facing.

This sequence belongs to the major facilitator superfamily. DHA1 family. MdtL (TC 2.A.1.2.22) subfamily.

The protein localises to the cell inner membrane. The chain is Multidrug resistance protein MdtL from Shewanella sp. (strain ANA-3).